The primary structure comprises 387 residues: 3-ketoacyl-CoA thiolase (387 aa).

Residue Cys91 is the Acyl-thioester intermediate of the active site. Residues His343 and Cys373 each act as proton acceptor in the active site.

The protein belongs to the thiolase-like superfamily. Thiolase family. Heterotetramer of two alpha chains (FadB) and two beta chains (FadA).

The protein localises to the cytoplasm. The enzyme catalyses an acyl-CoA + acetyl-CoA = a 3-oxoacyl-CoA + CoA. Its pathway is lipid metabolism; fatty acid beta-oxidation. Catalyzes the final step of fatty acid oxidation in which acetyl-CoA is released and the CoA ester of a fatty acid two carbons shorter is formed. The polypeptide is 3-ketoacyl-CoA thiolase (Shewanella baltica (strain OS155 / ATCC BAA-1091)).